The primary structure comprises 320 residues: MGSSSRVGDENSLLDLTEKVAVVTGANSGIGLYILFHVARAGAKVYLGARTEAKFNSAITRLKTEGLDTSKVVWLPFDLSDPRKAKESAKWLLERENRLDILINNAAKILGPYAQTSDGLSDSMVINHMSPYLFTKTLLPLLESTARQPGSDVRIVNVSSVAHRWVPNPRYDSLEAFNNNFADTWKPKTNLYGYTKLANVLWTKELQRSFDRANIPILAMTVHPGNVMSEGNVKLFTSLMFGTIINWVFSLFFISPFDGGYTPAFAAASRVIAEDRRKYAGAYIVPFGVIEEASEDARREDLAKDLLATTDAVLKQYDYA.

Residues 19–39 (KVAVVTGANSGIGLYILFHVA) form a helical membrane-spanning segment. NADP(+) contacts are provided by Ile-30, Asp-78, Asn-105, and Lys-136. Asn-157 carries an N-linked (GlcNAc...) asparagine glycan. Ser-159 serves as the catalytic Proton donor. Tyr-192, Lys-196, Val-227, and Ser-229 together coordinate NADP(+). Residue Tyr-192 is the Proton acceptor of the active site. Lys-196 serves as the catalytic Lowers pKa of active site Tyr. The chain crosses the membrane as a helical span at residues 235–255 (LFTSLMFGTIINWVFSLFFIS).

It belongs to the short-chain dehydrogenases/reductases (SDR) family.

It localises to the membrane. It participates in secondary metabolite biosynthesis. Its function is as follows. Short-chain dehydrogenase/reductase, part of the gene cluster that mediates the biosynthesis of melleolides, a range of antifungal and phytotoxic polyketide derivatives composed of an orsellinic acid (OA) moiety esterified to various sesquiterpene alcohols. The first step in melleolides biosynthesis is performed by the delta(6)-protoilludene synthase PRO1 which catalyzes the cyclization of farnesyl diphosphate to protoilludene. The orsellinic acid synthase armB produces OA by condensing acetyl-CoA with 3 malonyl-CoA units in a three-round chain elongation reaction folowed by a C2-C7 ring closure. ArmB further catalyzes the trans-esterification of OA to the various sesquiterpene alcohols resulting from the hydroxylation of protoilludene. The melleolides cluster also includes 5 cytochrome P450 monooxygenases, 4 NAD(+)-dependent oxidoreductases, one flavin-dependent oxidoreductase, and one O-methyltransferase. The cytochrome P450 monooxygenases may be involved in protoilludene hydroxylation to elaborate melleolides with multiple alcohol groups, such as melleolide D, which carries alcohol functionalities at C-4, C-5, C-10, and C-13. The role of the NAD(+)-dependent enzymes remains unknown. Numerous melleolides, including arnamial, show 5'-O-methylation of the aromatic moiety which may be catalyzed by the methyltransferase encoded in the cluster. The flavin-dependent oxidoreductase might represent the dehydrogenase yielding the aldehyde in position 1 of arnamial and other melleolides. Finally, several halogenase localized outside of the cluster, are able to catalyze the transfer of a single chlorine atom to the melleolide backbone, resulting in a 6'-chloromelleolide product. This chain is Short-chain dehydrogenase/reductase ARMGADRAFT_1169971, found in Armillaria gallica (Bulbous honey fungus).